The sequence spans 169 residues: MAVLQVLHIPDERLRKVAEPVKEVNAEIQRIVDDMFDTMYAEEGIGLAATQVDIHQRIIVIDVSENREERLVLINPELLEKDGETGIEEGCLSIPEQRALVPRAEKVKIRALDRDGKPFELEADGLLAICIQHEMDHLVGKLFIDYLSPLKQQRIRQKVEKLDRLRSRA.

C91 and H133 together coordinate Fe cation. E134 is an active-site residue. H137 contributes to the Fe cation binding site.

Belongs to the polypeptide deformylase family. Requires Fe(2+) as cofactor.

The enzyme catalyses N-terminal N-formyl-L-methionyl-[peptide] + H2O = N-terminal L-methionyl-[peptide] + formate. Removes the formyl group from the N-terminal Met of newly synthesized proteins. Requires at least a dipeptide for an efficient rate of reaction. N-terminal L-methionine is a prerequisite for activity but the enzyme has broad specificity at other positions. The polypeptide is Peptide deformylase (Klebsiella pneumoniae (strain 342)).